Here is a 233-residue protein sequence, read N- to C-terminus: MREHRPIIALDFPSFEVVKEFLALFPAEESLYLKVGMELYYAAGPEIVSYLKGLGHSVFLDLKLHDIPNTVKSAMKILSQLGVDMTNVHAAGGVEMMKAAREGLGSQAKLIAVTQLTSTSEAQMQEFQNIQTSLQESVIHYAKKTAEAGLDGVVCSAQEVQVIKQATNPDFICLTPGIRPAGVAVGDQKRVMTPADAYQIGSDYIVVGRPITQAEDPVAAYHAIKDEWTQDWN.

Substrate-binding positions include D11, K34, 61–70 (DLKLHDIPNT), T117, R179, Q188, G208, and R209. The Proton donor role is filled by K63.

Belongs to the OMP decarboxylase family. Type 1 subfamily. As to quaternary structure, homodimer.

It carries out the reaction orotidine 5'-phosphate + H(+) = UMP + CO2. It participates in pyrimidine metabolism; UMP biosynthesis via de novo pathway; UMP from orotate: step 2/2. Functionally, catalyzes the decarboxylation of orotidine 5'-monophosphate (OMP) to uridine 5'-monophosphate (UMP). The polypeptide is Orotidine 5'-phosphate decarboxylase (Streptococcus pneumoniae (strain Hungary19A-6)).